Consider the following 723-residue polypeptide: Capsid protein (723 aa).

The disordered stretch occupies residues 658–679 (QATPPPFKKPRTEDQEENPEET).

This sequence belongs to the anelloviridae capsid protein family.

It localises to the virion. In terms of biological role, self assemble to form an icosahedral capsid. This chain is Capsid protein, found in Torque teno virus (isolate Japanese macaque/Japan/Mf-TTV9/2000) (TTV).